A 198-amino-acid polypeptide reads, in one-letter code: Adenine phosphoribosyltransferase (198 aa).

The protein belongs to the purine/pyrimidine phosphoribosyltransferase family. As to quaternary structure, homodimer.

The protein resides in the cytoplasm. The enzyme catalyses AMP + diphosphate = 5-phospho-alpha-D-ribose 1-diphosphate + adenine. Its pathway is purine metabolism; AMP biosynthesis via salvage pathway; AMP from adenine: step 1/1. Its function is as follows. Catalyzes a salvage reaction resulting in the formation of AMP, that is energically less costly than de novo synthesis. This chain is Adenine phosphoribosyltransferase, found in Serratia proteamaculans (strain 568).